A 506-amino-acid polypeptide reads, in one-letter code: Maturase K (506 aa).

The protein belongs to the intron maturase 2 family. MatK subfamily.

It is found in the plastid. Its subcellular location is the chloroplast. Its function is as follows. Usually encoded in the trnK tRNA gene intron. Probably assists in splicing its own and other chloroplast group II introns. The protein is Maturase K of Jasminum nudiflorum (Winter jasmine).